Reading from the N-terminus, the 388-residue chain is Succinate--CoA ligase [ADP-forming] subunit beta (388 aa).

In terms of domain architecture, ATP-grasp spans 9 to 244; sequence KEILRKFGVA…LDEEDPAEIE (236 aa). ATP is bound by residues lysine 46, 53–55, glutamate 99, alanine 102, and glutamate 107; that span reads GRG. Mg(2+) contacts are provided by asparagine 199 and aspartate 213. Substrate is bound by residues asparagine 264 and 321–323; that span reads GIM.

This sequence belongs to the succinate/malate CoA ligase beta subunit family. In terms of assembly, heterotetramer of two alpha and two beta subunits. It depends on Mg(2+) as a cofactor.

It carries out the reaction succinate + ATP + CoA = succinyl-CoA + ADP + phosphate. It catalyses the reaction GTP + succinate + CoA = succinyl-CoA + GDP + phosphate. It functions in the pathway carbohydrate metabolism; tricarboxylic acid cycle; succinate from succinyl-CoA (ligase route): step 1/1. Succinyl-CoA synthetase functions in the citric acid cycle (TCA), coupling the hydrolysis of succinyl-CoA to the synthesis of either ATP or GTP and thus represents the only step of substrate-level phosphorylation in the TCA. The beta subunit provides nucleotide specificity of the enzyme and binds the substrate succinate, while the binding sites for coenzyme A and phosphate are found in the alpha subunit. This chain is Succinate--CoA ligase [ADP-forming] subunit beta, found in Burkholderia thailandensis (strain ATCC 700388 / DSM 13276 / CCUG 48851 / CIP 106301 / E264).